The sequence spans 355 residues: Peptide chain release factor 1 (355 aa).

The residue at position 231 (Q231) is an N5-methylglutamine.

This sequence belongs to the prokaryotic/mitochondrial release factor family. In terms of processing, methylated by PrmC. Methylation increases the termination efficiency of RF1.

The protein resides in the cytoplasm. In terms of biological role, peptide chain release factor 1 directs the termination of translation in response to the peptide chain termination codons UAG and UAA. In Nautilia profundicola (strain ATCC BAA-1463 / DSM 18972 / AmH), this protein is Peptide chain release factor 1.